We begin with the raw amino-acid sequence, 187 residues long: Benzene 1,2-dioxygenase subunit beta (187 aa).

It belongs to the bacterial ring-hydroxylating dioxygenase beta subunit family. As to quaternary structure, this dioxygenase system consists of four proteins: the two subunits of the hydroxylase component (BnzA and BnzB), a ferredoxin (BnzC) and a ferredoxin reductase (BnzD). [2Fe-2S] cluster is required as a cofactor. It depends on Fe cation as a cofactor.

The enzyme catalyses benzene + NADH + O2 + H(+) = cis-1,2-dihydrobenzene-1,2-diol + NAD(+). It carries out the reaction toluene + NADH + O2 + H(+) = (1S,2R)-3-methylcyclohexa-3,5-diene-1,2-diol + NAD(+). The protein operates within aromatic compound metabolism; benzene degradation; catechol from benzene: step 1/2. Its pathway is xenobiotic degradation; toluene degradation. It participates in xenobiotic degradation; xylene degradation. Catalyzes both the oxidation of benzene and toluene. The beta subunit may be responsible for the substrate specificity of the enzyme. The chain is Benzene 1,2-dioxygenase subunit beta (bnzB) from Pseudomonas putida (strain ATCC 700007 / DSM 6899 / JCM 31910 / BCRC 17059 / LMG 24140 / F1).